A 530-amino-acid polypeptide reads, in one-letter code: Sensor protein kinase PilS (530 aa).

6 helical membrane passes run 25–37 (LTIGLVLVLLISS), 57–70 (WCYLVFNILVALFL), 76–98 (LLPIFILALTDVLMLCGLFYAGG), 101–119 (PSGIGSLLVVAVAIANILL), 124–144 (GLVIAAAASLGLLYLTFFLSL), and 156–174 (AGGLGTLCFAAALVIQALV). Residues 175–530 (RRQEQTETLA…ITFAHPRKLS (356 aa)) lie on the Cytoplasmic side of the membrane. One can recognise a PAS domain in the interval 196-260 (ELNALILQRM…KQWRLNPSLR (65 aa)). Residues 316–527 (GIAHEIRNPL…CFRITFAHPR (212 aa)) form the Histidine kinase domain. His-319 bears the Phosphohistidine; by autocatalysis mark.

In terms of assembly, interacts with PilA.

It localises to the cell inner membrane. It catalyses the reaction ATP + protein L-histidine = ADP + protein N-phospho-L-histidine.. In terms of biological role, member of the two-component regulatory system PilS/PilR that regulates the expression of multiple genes including the type IV pilus (T4P) major subunit PilA. Thereby, plays a major role in the regulation of multiple motility pathways. Functions as a membrane-associated protein kinase that phosphorylates PilR in response to environmental signals leading to activation of specific gene promoters including the pilin gene. This Pseudomonas aeruginosa (strain ATCC 15692 / DSM 22644 / CIP 104116 / JCM 14847 / LMG 12228 / 1C / PRS 101 / PAO1) protein is Sensor protein kinase PilS (pilS).